The sequence spans 352 residues: Biotin synthase (352 aa).

The Radical SAM core domain maps to 41–268 (NEVQVSTLLS…ASHVRLSAGR (228 aa)). 3 residues coordinate [4Fe-4S] cluster: Cys-56, Cys-60, and Cys-63. [2Fe-2S] cluster is bound by residues Cys-100, Cys-131, Cys-191, and Arg-263.

Belongs to the radical SAM superfamily. Biotin synthase family. As to quaternary structure, homodimer. It depends on [4Fe-4S] cluster as a cofactor. [2Fe-2S] cluster is required as a cofactor.

The catalysed reaction is (4R,5S)-dethiobiotin + (sulfur carrier)-SH + 2 reduced [2Fe-2S]-[ferredoxin] + 2 S-adenosyl-L-methionine = (sulfur carrier)-H + biotin + 2 5'-deoxyadenosine + 2 L-methionine + 2 oxidized [2Fe-2S]-[ferredoxin]. The protein operates within cofactor biosynthesis; biotin biosynthesis; biotin from 7,8-diaminononanoate: step 2/2. Its function is as follows. Catalyzes the conversion of dethiobiotin (DTB) to biotin by the insertion of a sulfur atom into dethiobiotin via a radical-based mechanism. The protein is Biotin synthase of Marinobacter nauticus (strain ATCC 700491 / DSM 11845 / VT8) (Marinobacter aquaeolei).